The sequence spans 210 residues: MSVSDLRQSYEKSTLLEDSAAASPFDQFSQWFDQALAAQVPEPNAMTLATVDADGQPSARIVLIKGYDSRGFAFYTNYESRKGHDLLANPRAALLFFWQPLERQVRIEGRVEQVSAEESDAYFHSRPLGSRIGAWASRQSQPVTRAELEAREQEIRARYGEQPPRPPHWGGYRVVPTLFEFWQGRPSRLHDRLRYLPDGRGGWAIDRLSP.

Substrate is bound by residues 7–10 and Lys65; that span reads RQSY. FMN is bound by residues 60–65, 75–76, Arg81, Lys82, and Gln104; these read RIVLIK and YT. The substrate site is built by Tyr122, Arg126, and Ser130. Residues 139-140 and Trp182 each bind FMN; that span reads QS. 188-190 is a substrate binding site; the sequence is RLH. Arg192 provides a ligand contact to FMN.

The protein belongs to the pyridoxamine 5'-phosphate oxidase family. As to quaternary structure, homodimer. FMN serves as cofactor.

The enzyme catalyses pyridoxamine 5'-phosphate + O2 + H2O = pyridoxal 5'-phosphate + H2O2 + NH4(+). The catalysed reaction is pyridoxine 5'-phosphate + O2 = pyridoxal 5'-phosphate + H2O2. The protein operates within cofactor metabolism; pyridoxal 5'-phosphate salvage; pyridoxal 5'-phosphate from pyridoxamine 5'-phosphate: step 1/1. It participates in cofactor metabolism; pyridoxal 5'-phosphate salvage; pyridoxal 5'-phosphate from pyridoxine 5'-phosphate: step 1/1. Its function is as follows. Catalyzes the oxidation of either pyridoxine 5'-phosphate (PNP) or pyridoxamine 5'-phosphate (PMP) into pyridoxal 5'-phosphate (PLP). This Bordetella petrii (strain ATCC BAA-461 / DSM 12804 / CCUG 43448) protein is Pyridoxine/pyridoxamine 5'-phosphate oxidase.